A 715-amino-acid chain; its full sequence is ATP-dependent zinc metalloprotease YME1L1 (715 aa).

Residues 1–237 (MFSLSSTVQP…TNDSLRRTRL (237 aa)) lie on the Mitochondrial matrix side of the membrane. Residues 34–54 (NTPVSQKQHRDTVPEHEAPSS) are disordered. Over residues 41–52 (QHRDTVPEHEAP) the composition is skewed to basic and acidic residues. The helical transmembrane segment at 238-258 (ILFVLLLFGIYGLLKNPFLSV) threads the bilayer. The Mitochondrial intermembrane portion of the chain corresponds to 259-715 (RFRTTTGLDS…VLEGKKLEVR (457 aa)). ATP-binding residues include Val283, Thr325, Gly326, Lys327, Thr328, and Leu329. His541 contacts Zn(2+). Glu542 is a catalytic residue. Zn(2+) is bound by residues His545 and Asp619.

It in the N-terminal section; belongs to the AAA ATPase family. The protein in the C-terminal section; belongs to the peptidase M41 family. As to quaternary structure, homohexamer; may also form heterohexamers. Exists in several complexes of 600-1100 kDa. Interacts with AFG1L. The cofactor is Zn(2+). Post-translationally, proteolytically processed by mitochondrial processing peptidase (MPP) to generate the mature form. Degraded in an OMA1-dependent manner in response to oxidative stress. Detected in heart and skeletal muscle (at protein level).

It is found in the mitochondrion inner membrane. Its subcellular location is the mitochondrion. It carries out the reaction ATP + H2O = ADP + phosphate + H(+). ATP-dependent metalloprotease that catalyzes the degradation of folded and unfolded proteins with a suitable degron sequence in the mitochondrial intermembrane region. Plays an important role in regulating mitochondrial morphology and function by cleaving OPA1 at position S2, giving rise to a form of OPA1 that promotes maintenance of normal mitochondrial structure and mitochondrial protein metabolism. Ensures cell proliferation, maintains normal cristae morphology and complex I respiration activity, promotes antiapoptotic activity and protects mitochondria from the accumulation of oxidatively damaged membrane proteins. Required to control the accumulation of nonassembled respiratory chain subunits (NDUFB6, OX4 and ND1). Involved in the mitochondrial adaptation in response to various signals, such as stress or developmental cues, by mediating degradation of mitochondrial proteins to rewire the mitochondrial proteome. Catalyzes degradation of mitochondrial proteins, such as translocases, lipid transfer proteins and metabolic enzymes in response to nutrient starvation in order to limit mitochondrial biogenesis: mechanistically, YME1L is activated by decreased phosphatidylethanolamine levels caused by LPIN1 activity in response to mTORC1 inhibition. Acts as a regulator of adult neural stem cell self-renewal by promoting mitochondrial proteome rewiring, preserving neural stem and progenitor cells self-renewal. Required for normal, constitutive degradation of PRELID1. Catalyzes the degradation of OMA1 in response to membrane depolarization. Mediates degradation of TIMM17A downstream of the integrated stress response (ISR). Catalyzes degradation of MICU1 when MICU1 is not assembled via an interchain disulfide. This is ATP-dependent zinc metalloprotease YME1L1 (Yme1l1) from Mus musculus (Mouse).